Here is a 450-residue protein sequence, read N- to C-terminus: Tubulin alpha chain, testis-specific (450 aa).

The MREC motif motif lies at 1–4 (MREC). Gln-11 provides a ligand contact to GTP. Lys-40 is modified (N6-acetyllysine). The GTP site is built by Glu-71, Ser-140, Gly-144, Thr-145, Thr-179, Asn-206, and Asn-228. Glu-71 provides a ligand contact to Mg(2+). Glu-254 is a catalytic residue.

The protein belongs to the tubulin family. As to quaternary structure, dimer of alpha and beta chains. A typical microtubule is a hollow water-filled tube with an outer diameter of 25 nm and an inner diameter of 15 nM. Alpha-beta heterodimers associate head-to-tail to form protofilaments running lengthwise along the microtubule wall with the beta-tubulin subunit facing the microtubule plus end conferring a structural polarity. Microtubules usually have 13 protofilaments but different protofilament numbers can be found in some organisms and specialized cells. Mg(2+) serves as cofactor. Some glutamate residues at the C-terminus are polyglycylated, resulting in polyglycine chains on the gamma-carboxyl group. Glycylation is mainly limited to tubulin incorporated into axonemes (cilia and flagella) whereas glutamylation is prevalent in neuronal cells, centrioles, axonemes, and the mitotic spindle. Both modifications can coexist on the same protein on adjacent residues, and lowering polyglycylation levels increases polyglutamylation, and reciprocally. The precise function of polyglycylation is still unclear. Post-translationally, some glutamate residues at the C-terminus are polyglutamylated, resulting in polyglutamate chains on the gamma-carboxyl group. Polyglutamylation plays a key role in microtubule severing by spastin (SPAST). SPAST preferentially recognizes and acts on microtubules decorated with short polyglutamate tails: severing activity by SPAST increases as the number of glutamates per tubulin rises from one to eight, but decreases beyond this glutamylation threshold. In terms of processing, acetylation of alpha chains at Lys-40 is located inside the microtubule lumen. This modification has been correlated with increased microtubule stability, intracellular transport and ciliary assembly. Undergoes a tyrosination/detyrosination cycle, the cyclic removal and re-addition of a C-terminal tyrosine residue by the enzymes tubulin tyrosine carboxypeptidase (MATCAP, VASH1 or VASH2) and tubulin tyrosine ligase (TTL), respectively. Post-translationally, tyrosination promotes microtubule interaction with CAP-Gly microtubule plus-end tracking proteins. Tyrosinated tubulins regulate the initiation of dynein-driven motility. In terms of processing, detyrosination is involved in metaphase plate congression by guiding chromosomes during mitosis. Detyrosination increases microtubules-dependent mechanotransduction in dystrophic cardiac and skeletal muscle. In cardiomyocytes, detyrosinated microtubules are required to resist to contractile compression during contraction. Testis specific.

The protein localises to the cytoplasm. Its subcellular location is the cytoskeleton. The enzyme catalyses GTP + H2O = GDP + phosphate + H(+). In terms of biological role, tubulin is the major constituent of microtubules, a cylinder consisting of laterally associated linear protofilaments composed of alpha- and beta-tubulin heterodimers. Microtubules grow by the addition of GTP-tubulin dimers to the microtubule end, where a stabilizing cap forms. Below the cap, tubulin dimers are in GDP-bound state, owing to GTPase activity of alpha-tubulin. This is Tubulin alpha chain, testis-specific from Oncorhynchus mykiss (Rainbow trout).